The sequence spans 128 residues: Small ribosomal subunit protein eS6 (128 aa).

This sequence belongs to the eukaryotic ribosomal protein eS6 family.

The polypeptide is Small ribosomal subunit protein eS6 (Methanobrevibacter smithii (strain ATCC 35061 / DSM 861 / OCM 144 / PS)).